The following is a 119-amino-acid chain: Centrocin 1 (119 aa).

Positions 1–20 are cleaved as a signal peptide; that stretch reads MMIKIAVVLCAVMATTMVRA. A propeptide spanning residues 21–50 is cleaved from the precursor; it reads KYVEEQELADLLDLLISEEVSSPDDAVALQ. A 6'-bromotryptophan mark is found at Trp-52 and Trp-53. A disulfide bridge connects residues Cys-75 and Cys-110. The propeptide occupies 81–104; the sequence is SPQEARAKVLEAFPEMKEADLDEE. At Asn-117 the chain carries Asparagine amide.

Heterodimer of a light and a heavy chain, probably disulfide-linked.

Has antimicrobial activity against Gram-negative bacteria, Gram-positive bacteria and against fungi with minimum inhibitory concentration (MIC) between 0.78 uM and 50 uM. Shows little hemolytic activity even at a concentration of 100 uM. Functionally, has no antimicrobial activity. Shows no hemolytic activity. The chain is Centrocin 1 from Echinus esculentus (Sea urchin).